The following is a 222-amino-acid chain: Small ribosomal subunit protein uS3 (222 aa).

The region spanning 39-107 (VREFLHKKLA…PVQINIEEVR (69 aa)) is the KH type-2 domain.

It belongs to the universal ribosomal protein uS3 family. In terms of assembly, part of the 30S ribosomal subunit. Forms a tight complex with proteins S10 and S14.

Binds the lower part of the 30S subunit head. Binds mRNA in the 70S ribosome, positioning it for translation. This chain is Small ribosomal subunit protein uS3, found in Francisella tularensis subsp. tularensis (strain FSC 198).